The primary structure comprises 194 residues: uncharacterized protein (194 aa).

This is an uncharacterized protein from Aquifex aeolicus (strain VF5).